The following is a 171-amino-acid chain: T-cell surface glycoprotein CD3 delta chain (171 aa).

The first 21 residues, 1-21, serve as a signal peptide directing secretion; the sequence is MEHSTFLSGLVLATLLSQVSP. At 22 to 105 the chain is on the extracellular side; it reads FKIPVEELED…CVELDPATLA (84 aa). An intrachain disulfide couples Cys37 to Cys73. N-linked (GlcNAc...) asparagine glycans are attached at residues Asn38, Asn54, and Asn74. A helical membrane pass occupies residues 106-126; that stretch reads GIIVTDVIATLLLALGVFCFA. The Cytoplasmic portion of the chain corresponds to 127–171; it reads GHETGRLSGAADTQALLRNDQVYQPLRDRDDAQYSRLGGNWARNK. The ITAM domain occupies 138-166; it reads DTQALLRNDQVYQPLRDRDDAQYSRLGGN. Residues Tyr149 and Tyr160 each carry the phosphotyrosine modification.

As to quaternary structure, the TCR-CD3 complex is composed of a CD3D/CD3E and a CD3G/CD3E heterodimers that preferentially associate with TCRalpha and TCRbeta, respectively, to form TCRalpha/CD3E/CD3G and TCRbeta/CD3G/CD3E trimers. In turn, the hexamer interacts with CD3Z homodimer to form the TCR-CD3 complex. Alternatively, TCRalpha and TCRbeta can be replaced by TCRgamma and TCRdelta. Interacts with coreceptors CD4 and CD8. In terms of processing, phosphorylated on Tyr residues after T-cell receptor triggering by LCK in association with CD4/CD8. CD3D is mostly present on T-lymphocytes with its TCR-CD3 partners. Present also in fetal NK-cells.

It is found in the cell membrane. Its function is as follows. Part of the TCR-CD3 complex present on T-lymphocyte cell surface that plays an essential role in adaptive immune response. When antigen presenting cells (APCs) activate T-cell receptor (TCR), TCR-mediated signals are transmitted across the cell membrane by the CD3 chains CD3D, CD3E, CD3G and CD3Z. All CD3 chains contain immunoreceptor tyrosine-based activation motifs (ITAMs) in their cytoplasmic domain. Upon TCR engagement, these motifs become phosphorylated by Src family protein tyrosine kinases LCK and FYN, resulting in the activation of downstream signaling pathways. In addition of this role of signal transduction in T-cell activation, CD3D plays an essential role in thymocyte differentiation. Indeed, participates in correct intracellular TCR-CD3 complex assembly and surface expression. In absence of a functional TCR-CD3 complex, thymocytes are unable to differentiate properly. Interacts with CD4 and CD8 and thus serves to establish a functional link between the TCR and coreceptors CD4 and CD8, which is needed for activation and positive selection of CD4 or CD8 T-cells. This chain is T-cell surface glycoprotein CD3 delta chain (CD3D), found in Macaca fascicularis (Crab-eating macaque).